Consider the following 206-residue polypeptide: Imidazoleglycerol-phosphate dehydratase (206 aa).

It belongs to the imidazoleglycerol-phosphate dehydratase family.

It localises to the cytoplasm. It catalyses the reaction D-erythro-1-(imidazol-4-yl)glycerol 3-phosphate = 3-(imidazol-4-yl)-2-oxopropyl phosphate + H2O. It participates in amino-acid biosynthesis; L-histidine biosynthesis; L-histidine from 5-phospho-alpha-D-ribose 1-diphosphate: step 6/9. In Synechococcus sp. (strain JA-3-3Ab) (Cyanobacteria bacterium Yellowstone A-Prime), this protein is Imidazoleglycerol-phosphate dehydratase.